We begin with the raw amino-acid sequence, 352 residues long: Molybdenum import ATP-binding protein ModC (352 aa).

Residues 1–229 form the ABC transporter domain; the sequence is MLELNFSQTL…SVMHPWLPKE (229 aa). Position 31–38 (31–38) interacts with ATP; it reads GVSGAGKT. The 64-residue stretch at 289–352 folds into the Mop domain; the sequence is QTSIRNVLRA…AQVKSVSITA (64 aa).

Belongs to the ABC transporter superfamily. Molybdate importer (TC 3.A.1.8) family. The complex is composed of two ATP-binding proteins (ModC), two transmembrane proteins (ModB) and a solute-binding protein (ModA).

It localises to the cell inner membrane. The catalysed reaction is molybdate(out) + ATP + H2O = molybdate(in) + ADP + phosphate + H(+). In terms of biological role, part of the ABC transporter complex ModABC involved in molybdenum import. Responsible for energy coupling to the transport system. This is Molybdenum import ATP-binding protein ModC from Salmonella typhi.